Reading from the N-terminus, the 447-residue chain is Glyceraldehyde-3-phosphate dehydrogenase GAPB, chloroplastic (447 aa).

A chloroplast-targeting transit peptide spans 1-80; the sequence is MATHAALAVS…STPVRGETVA (80 aa). NADP(+)-binding positions include 91-92, Asp-115, and Arg-160; that span reads RI. D-glyceraldehyde 3-phosphate is bound by residues 234–236, Thr-265, Arg-280, 293–294, and Arg-316; these read SCT and TG. The active-site Nucleophile is Cys-235. An NADP(+)-binding site is contributed by Asn-399.

It belongs to the glyceraldehyde-3-phosphate dehydrogenase family. In terms of assembly, tetramer of either four A chains (GAPDH 2) or two A and two B chains (GAPDH 1). Expressed in leaves and stems.

It is found in the plastid. The protein localises to the chloroplast membrane. It localises to the chloroplast stroma. The enzyme catalyses D-glyceraldehyde 3-phosphate + phosphate + NADP(+) = (2R)-3-phospho-glyceroyl phosphate + NADPH + H(+). It functions in the pathway carbohydrate biosynthesis; Calvin cycle. Involved in the photosynthetic reductive pentose phosphate pathway (Calvin-Benson cycle). Catalyzes the reduction of 1,3-diphosphoglycerate by NADPH. The sequence is that of Glyceraldehyde-3-phosphate dehydrogenase GAPB, chloroplastic (GAPB) from Arabidopsis thaliana (Mouse-ear cress).